The chain runs to 113 residues: uncharacterized protein (113 aa).

The tract at residues 78-113 (YCNRGSERTNQGNRGSAPSKILLPRTIADPFRGGPE) is disordered.

This is an uncharacterized protein from Halobacterium phage phiH (Bacteriophage phi-H).